The chain runs to 189 residues: Large ribosomal subunit protein bL9 (189 aa).

The protein belongs to the bacterial ribosomal protein bL9 family.

Binds to the 23S rRNA. The sequence is that of Large ribosomal subunit protein bL9 from Beijerinckia indica subsp. indica (strain ATCC 9039 / DSM 1715 / NCIMB 8712).